A 470-amino-acid polypeptide reads, in one-letter code: Ribosomal protein uS12 methylthiotransferase RimO (470 aa).

The 112-residue stretch at 20 to 131 (PTVAFAHLGC…IVEVLQQVEA (112 aa)) folds into the MTTase N-terminal domain. Residues C29, C65, C94, C169, C173, and C176 each coordinate [4Fe-4S] cluster. The region spanning 155–384 (TTGEAVAYLK…MTLQQPISAA (230 aa)) is the Radical SAM core domain. The region spanning 387 to 458 (ASWIGKTVDV…IYDLSGHVVS (72 aa)) is the TRAM domain.

This sequence belongs to the methylthiotransferase family. RimO subfamily. [4Fe-4S] cluster serves as cofactor.

The protein localises to the cytoplasm. The catalysed reaction is L-aspartate(89)-[ribosomal protein uS12]-hydrogen + (sulfur carrier)-SH + AH2 + 2 S-adenosyl-L-methionine = 3-methylsulfanyl-L-aspartate(89)-[ribosomal protein uS12]-hydrogen + (sulfur carrier)-H + 5'-deoxyadenosine + L-methionine + A + S-adenosyl-L-homocysteine + 2 H(+). Catalyzes the methylthiolation of an aspartic acid residue of ribosomal protein uS12. The sequence is that of Ribosomal protein uS12 methylthiotransferase RimO from Synechococcus sp. (strain CC9311).